Consider the following 84-residue polypeptide: NADH dehydrogenase [ubiquinone] 1 alpha subcomplex subunit 3 (84 aa).

An N-acetylalanine modification is found at alanine 2. A helical membrane pass occupies residues 19–39 (LVVSFSVWGLAIIMPMISPYT). The segment at 59-84 (DDGNMPDVPSHPQDPLGPSLDWLKNL) is disordered.

This sequence belongs to the complex I NDUFA3 subunit family. In terms of assembly, complex I is composed of 45 different subunits.

It is found in the mitochondrion inner membrane. Functionally, accessory subunit of the mitochondrial membrane respiratory chain NADH dehydrogenase (Complex I), that is believed not to be involved in catalysis. Complex I functions in the transfer of electrons from NADH to the respiratory chain. The immediate electron acceptor for the enzyme is believed to be ubiquinone. The chain is NADH dehydrogenase [ubiquinone] 1 alpha subcomplex subunit 3 (Ndufa3) from Mus musculus (Mouse).